The following is a 270-amino-acid chain: Probable septum site-determining protein MinC (270 aa).

Positions 105 to 129 are disordered; sequence DRRAPSSKAADEAPVQQAEPAAPAA. The segment covering 116–129 has biased composition (low complexity); the sequence is EAPVQQAEPAAPAA.

This sequence belongs to the MinC family. In terms of assembly, interacts with MinD and FtsZ.

Functionally, cell division inhibitor that blocks the formation of polar Z ring septums. Rapidly oscillates between the poles of the cell to destabilize FtsZ filaments that have formed before they mature into polar Z rings. Prevents FtsZ polymerization. This Burkholderia mallei (strain NCTC 10247) protein is Probable septum site-determining protein MinC.